We begin with the raw amino-acid sequence, 156 residues long: SsrA-binding protein (156 aa).

The interval 135-156 (HALRERQDRREADRAMSERKDR) is disordered.

It belongs to the SmpB family.

Its subcellular location is the cytoplasm. In terms of biological role, required for rescue of stalled ribosomes mediated by trans-translation. Binds to transfer-messenger RNA (tmRNA), required for stable association of tmRNA with ribosomes. tmRNA and SmpB together mimic tRNA shape, replacing the anticodon stem-loop with SmpB. tmRNA is encoded by the ssrA gene; the 2 termini fold to resemble tRNA(Ala) and it encodes a 'tag peptide', a short internal open reading frame. During trans-translation Ala-aminoacylated tmRNA acts like a tRNA, entering the A-site of stalled ribosomes, displacing the stalled mRNA. The ribosome then switches to translate the ORF on the tmRNA; the nascent peptide is terminated with the 'tag peptide' encoded by the tmRNA and targeted for degradation. The ribosome is freed to recommence translation, which seems to be the essential function of trans-translation. This Kineococcus radiotolerans (strain ATCC BAA-149 / DSM 14245 / SRS30216) protein is SsrA-binding protein.